A 496-amino-acid polypeptide reads, in one-letter code: Glycerol kinase (496 aa).

Thr12 contributes to the ADP binding site. ATP contacts are provided by Thr12, Thr13, and Ser14. Thr12 provides a ligand contact to sn-glycerol 3-phosphate. Position 16 (Arg16) interacts with ADP. Sn-glycerol 3-phosphate is bound by residues Arg82, Glu83, and Tyr134. Glycerol contacts are provided by Arg82, Glu83, and Tyr134. At His230 the chain carries Phosphohistidine; by HPr. Asp244 lines the sn-glycerol 3-phosphate pocket. Glycerol is bound by residues Asp244 and Gln245. Residues Thr266 and Gly309 each contribute to the ADP site. 4 residues coordinate ATP: Thr266, Gly309, Gln313, and Gly410. 2 residues coordinate ADP: Gly410 and Asn414.

It belongs to the FGGY kinase family. In terms of assembly, homotetramer and homodimer (in equilibrium). Post-translationally, the phosphoenolpyruvate-dependent sugar phosphotransferase system (PTS), including enzyme I, and histidine-containing protein (HPr) are required for the phosphorylation, which leads to the activation of the enzyme.

The catalysed reaction is glycerol + ATP = sn-glycerol 3-phosphate + ADP + H(+). It functions in the pathway polyol metabolism; glycerol degradation via glycerol kinase pathway; sn-glycerol 3-phosphate from glycerol: step 1/1. Its activity is regulated as follows. Activated by phosphorylation and inhibited by fructose 1,6-bisphosphate (FBP). Functionally, key enzyme in the regulation of glycerol uptake and metabolism. Catalyzes the phosphorylation of glycerol to yield sn-glycerol 3-phosphate. The chain is Glycerol kinase from Bacillus licheniformis (strain ATCC 14580 / DSM 13 / JCM 2505 / CCUG 7422 / NBRC 12200 / NCIMB 9375 / NCTC 10341 / NRRL NRS-1264 / Gibson 46).